The following is a 123-amino-acid chain: Small ribosomal subunit protein uS12 (123 aa).

Asp90 is subject to 3-methylthioaspartic acid.

The protein belongs to the universal ribosomal protein uS12 family. As to quaternary structure, part of the 30S ribosomal subunit. Contacts proteins S8 and S17. May interact with IF1 in the 30S initiation complex.

With S4 and S5 plays an important role in translational accuracy. Its function is as follows. Interacts with and stabilizes bases of the 16S rRNA that are involved in tRNA selection in the A site and with the mRNA backbone. Located at the interface of the 30S and 50S subunits, it traverses the body of the 30S subunit contacting proteins on the other side and probably holding the rRNA structure together. The combined cluster of proteins S8, S12 and S17 appears to hold together the shoulder and platform of the 30S subunit. The chain is Small ribosomal subunit protein uS12 from Ehrlichia ruminantium (strain Gardel).